We begin with the raw amino-acid sequence, 237 residues long: MTVLPALPPLDDLETLNVHLETLSAENRVCWALQHAPDHPALSSSFGAQSAVMLHLLTRFAPDIPVILVDTGYLFPETYRFADTLTERLKLNLKVYQPLRSGTWTEARHGRLWEQGIDGINQYNTLHKVEPMRRALEELQVGTWFTGLRRGQSSTRTQTSIVQRRDERYKISPIVDWTDRDIWEYMKHHDLPYHPLWEQGYVSIGDIHTTRPLEPDMREEDTRFFGFKRECGIHENI.

Cys231 acts as the Nucleophile; cysteine thiosulfonate intermediate in catalysis.

This sequence belongs to the PAPS reductase family. CysH subfamily.

The protein resides in the cytoplasm. The catalysed reaction is [thioredoxin]-disulfide + sulfite + adenosine 3',5'-bisphosphate + 2 H(+) = [thioredoxin]-dithiol + 3'-phosphoadenylyl sulfate. It participates in sulfur metabolism; hydrogen sulfide biosynthesis; sulfite from sulfate: step 3/3. Catalyzes the formation of sulfite from phosphoadenosine 5'-phosphosulfate (PAPS) using thioredoxin as an electron donor. In Xylella fastidiosa (strain M12), this protein is Phosphoadenosine 5'-phosphosulfate reductase.